The sequence spans 607 residues: BTB/POZ domain-containing protein DOT3 (607 aa).

Residues 52–121 (TDLSIQVNDI…CYNLPLDLNP (70 aa)) enclose the BTB domain. An NPH3 domain is found at 211–487 (RCLYNDIATL…VQINTQVLFS (277 aa)). Tyr428 bears the Phosphotyrosine mark. Disordered stretches follow at residues 498 to 520 (DKLPEKEEENSGGREDKRMSRDN) and 573 to 607 (KSFQTKREDEETRERTRRRSSTGQRTSFRRRMSMS). 2 stretches are compositionally biased toward basic and acidic residues: residues 499 to 520 (KLPEKEEENSGGREDKRMSRDN) and 577 to 586 (TKREDEETRE). The stretch at 511 to 563 (REDKRMSRDNEIIKTLKEELENVKKKMSELQSDYNELQQEYERLSSKQKSSHN) forms a coiled coil.

Belongs to the NPH3 family. As to expression, expressed in emerging leaf primordia.

It participates in protein modification; protein ubiquitination. Its function is as follows. May act as a substrate-specific adapter of an E3 ubiquitin-protein ligase complex (CUL3-RBX1-BTB) which mediates the ubiquitination and subsequent proteasomal degradation of target proteins. Involved in leaf vasculature patterning. This chain is BTB/POZ domain-containing protein DOT3, found in Arabidopsis thaliana (Mouse-ear cress).